Reading from the N-terminus, the 265-residue chain is Flap endonuclease Xni (265 aa).

Aspartate 111 lines the Mg(2+) pocket. The 94-residue stretch at 167 to 260 (VVPAQLVDFW…NLREIRYPPA (94 aa)) folds into the 5'-3' exonuclease domain. Residues leucine 178, valine 189, and isoleucine 192 each contribute to the K(+) site. Positions 191–196 (GIGPKT) are interaction with DNA.

This sequence belongs to the Xni family. It depends on Mg(2+) as a cofactor. Requires K(+) as cofactor.

In terms of biological role, has flap endonuclease activity. During DNA replication, flap endonucleases cleave the 5'-overhanging flap structure that is generated by displacement synthesis when DNA polymerase encounters the 5'-end of a downstream Okazaki fragment. This Aeromonas salmonicida (strain A449) protein is Flap endonuclease Xni.